A 493-amino-acid chain; its full sequence is MSQHSQYGVPGVPAQSSLSFTQGFLLGQLSVVLLIGAFIKFFIFGEAPAPPSRGLASRTASHHRSYSINQGDNNANNNTNNGSSPRTLREKPSTSNVLRPVPSSATNTRSILRKTYYNAIPTQLSHTKQGRHRIQHSTHQPESLDWFNVLIAQTIAQYRQTAYLLKDSPTSSILDSLSAAINDPQKKPSFIDTIKVTDISLGEEFPIFSNCRVIAVDDSNSDGGRLQALMDVDLSDDNLSLAIETSLILNYPKPRSAVLPVALSVSVVRFSGTLCISLIPASTPQSPSSAPTPDAGNLNMRSLFQHISAELNGTAPNPTATNPSGKKGVPKTNLAFSFLPDYRLDLSVRSLIGSRSRLQDVPKVAQLVEARIQSWFEERVVEPRVQVVGLPDFWPRMGRTGVRPGDDVEAAAAAAAASVSSRSGGGPVEATTLSGSAEEAIIDDSPVRPGLRFRGSATATAGRSDSSFEEIPRASPQTPLDIPGSMPRVVRTP.

Residues 1 to 23 are Lumenal-facing; that stretch reads MSQHSQYGVPGVPAQSSLSFTQG. Residues 24 to 44 form a helical membrane-spanning segment; sequence FLLGQLSVVLLIGAFIKFFIF. Over 45–493 the chain is Cytoplasmic; the sequence is GEAPAPPSRG…GSMPRVVRTP (449 aa). The tract at residues 52 to 104 is disordered; that stretch reads SRGLASRTASHHRSYSINQGDNNANNNTNNGSSPRTLREKPSTSNVLRPVPSS. A compositionally biased stretch (low complexity) spans 69–81; the sequence is NQGDNNANNNTNN. The span at 93–104 shows a compositional bias: polar residues; the sequence is STSNVLRPVPSS. The 252-residue stretch at 140-391 folds into the SMP-LTD domain; the sequence is QPESLDWFNV…EPRVQVVGLP (252 aa). The disordered stretch occupies residues 420–493; it reads SSRSGGGPVE…GSMPRVVRTP (74 aa).

Belongs to the MMM1 family. Homodimer. Component of the ER-mitochondria encounter structure (ERMES) or MDM complex, composed of mmm1, mdm10, mdm12 and mdm34. A mmm1 homodimer associates with one molecule of mdm12 on each side in a pairwise head-to-tail manner, and the SMP-LTD domains of mmm1 and mdm12 generate a continuous hydrophobic tunnel for phospholipid trafficking.

The protein localises to the endoplasmic reticulum membrane. Component of the ERMES/MDM complex, which serves as a molecular tether to connect the endoplasmic reticulum (ER) and mitochondria. Components of this complex are involved in the control of mitochondrial shape and protein biogenesis, and function in nonvesicular lipid trafficking between the ER and mitochondria. The mdm12-mmm1 subcomplex functions in the major beta-barrel assembly pathway that is responsible for biogenesis of all outer membrane beta-barrel proteins, and acts in a late step after the SAM complex. The mdm10-mdm12-mmm1 subcomplex further acts in the TOM40-specific pathway after the action of the mdm12-mmm1 complex. Essential for establishing and maintaining the structure of mitochondria and maintenance of mtDNA nucleoids. In Talaromyces stipitatus (strain ATCC 10500 / CBS 375.48 / QM 6759 / NRRL 1006) (Penicillium stipitatum), this protein is Maintenance of mitochondrial morphology protein 1.